A 450-amino-acid polypeptide reads, in one-letter code: Salicylate synthase (450 aa).

Glutamate 252 serves as the catalytic Proton donor. Residue 270 to 271 participates in substrate binding; sequence GT. Glutamate 297 contributes to the Mg(2+) binding site. Residues tyrosine 385, arginine 405, and 419–421 contribute to the substrate site; that span reads GAG. 2 residues coordinate Mg(2+): glutamate 431 and glutamate 434. Position 438 (lysine 438) interacts with substrate.

Belongs to the anthranilate synthase component I family. Salicylate synthase subfamily. As to quaternary structure, monomer. The cofactor is Mg(2+).

The catalysed reaction is chorismate = isochorismate. The enzyme catalyses isochorismate = salicylate + pyruvate. It carries out the reaction chorismate = prephenate. The protein operates within siderophore biosynthesis; mycobactin biosynthesis. In terms of biological role, involved in the incorporation of salicylate into the virulence-conferring salicylate-based siderophore mycobactin. Catalyzes the initial conversion of chorismate to yield the intermediate isochorismate (isochorismate synthase activity), and the subsequent elimination of the enolpyruvyl side chain in a lyase reaction to give salicylate (isochorismate pyruvate-lyase activity). In the absence of magnesium, MbtI displays a chorismate mutase activity and converts chorismate to prephenate. The chain is Salicylate synthase (mbtI) from Mycolicibacterium paratuberculosis (strain ATCC BAA-968 / K-10) (Mycobacterium paratuberculosis).